A 724-amino-acid polypeptide reads, in one-letter code: ATPase family protein 2 homolog (724 aa).

ATP is bound by residues 281–287 (PGSGKTL) and 503–508 (GCSKTL).

The protein belongs to the AAA ATPase family. AFG2 subfamily. Homohexamer; ATP binding induces oligomerization. Forms a ring-shaped particle of about 12 nm diameter, that displays 6-fold radial symmetry. Interacts (via N-terminus) with kinase air-2; the interaction is direct and inhibits air-2 kinase activity in an ATPase-dependent manner.

The protein localises to the cytoplasm. It carries out the reaction ATP + H2O = ADP + phosphate + H(+). Functionally, ATP-dependent chaperone which uses the energy provided by ATP hydrolysis to generate mechanical force to disassemble protein complexes. Required for various steps of embryonic mitosis including centrosome duplication, spindle assembly, ER dynamics and cell cycle progression. Regulates the stability and activity of kinase air-2, a component of the chromosomal passenger complex (CPC). Inhibits air-2 kinase activity from metaphase to late telophase and negatively regulates air-2 stability during mitotic exit. Controls ER transition into sheet-like structures at the onset of mitosis, possibly by regulating homotypic membrane fusion. The chain is ATPase family protein 2 homolog from Caenorhabditis elegans.